Here is a 159-residue protein sequence, read N- to C-terminus: Ribosomal RNA large subunit methyltransferase H (159 aa).

Residues Leu-76, Gly-108, and 127-132 (LSKMTF) each bind S-adenosyl-L-methionine.

It belongs to the RNA methyltransferase RlmH family. In terms of assembly, homodimer.

It localises to the cytoplasm. The catalysed reaction is pseudouridine(1915) in 23S rRNA + S-adenosyl-L-methionine = N(3)-methylpseudouridine(1915) in 23S rRNA + S-adenosyl-L-homocysteine + H(+). Its function is as follows. Specifically methylates the pseudouridine at position 1915 (m3Psi1915) in 23S rRNA. This is Ribosomal RNA large subunit methyltransferase H from Ureaplasma urealyticum serovar 10 (strain ATCC 33699 / Western).